A 329-amino-acid polypeptide reads, in one-letter code: GTP 3',8-cyclase (329 aa).

Residues 8–234 (AFARKFYYLR…QLRQRSDGPA (227 aa)) form the Radical SAM core domain. Residue arginine 17 participates in GTP binding. Cysteine 24 and cysteine 28 together coordinate [4Fe-4S] cluster. Tyrosine 30 contributes to the S-adenosyl-L-methionine binding site. Cysteine 31 serves as a coordination point for [4Fe-4S] cluster. Arginine 68 is a GTP binding site. Glycine 72 serves as a coordination point for S-adenosyl-L-methionine. Threonine 99 serves as a coordination point for GTP. Serine 123 contacts S-adenosyl-L-methionine. Lysine 160 lines the GTP pocket. Methionine 194 contacts S-adenosyl-L-methionine. Residues cysteine 257 and cysteine 260 each contribute to the [4Fe-4S] cluster site. GTP is bound at residue 262-264 (RLR). Cysteine 274 contacts [4Fe-4S] cluster.

The protein belongs to the radical SAM superfamily. MoaA family. Monomer and homodimer. [4Fe-4S] cluster serves as cofactor.

The catalysed reaction is GTP + AH2 + S-adenosyl-L-methionine = (8S)-3',8-cyclo-7,8-dihydroguanosine 5'-triphosphate + 5'-deoxyadenosine + L-methionine + A + H(+). Its pathway is cofactor biosynthesis; molybdopterin biosynthesis. In terms of biological role, catalyzes the cyclization of GTP to (8S)-3',8-cyclo-7,8-dihydroguanosine 5'-triphosphate. The protein is GTP 3',8-cyclase of Salmonella dublin (strain CT_02021853).